Consider the following 467-residue polypeptide: ATP synthase subunit beta (467 aa).

152–159 lines the ATP pocket; sequence GGAGVGKT.

Belongs to the ATPase alpha/beta chains family. As to quaternary structure, F-type ATPases have 2 components, CF(1) - the catalytic core - and CF(0) - the membrane proton channel. CF(1) has five subunits: alpha(3), beta(3), gamma(1), delta(1), epsilon(1). CF(0) has three main subunits: a(1), b(2) and c(9-12). The alpha and beta chains form an alternating ring which encloses part of the gamma chain. CF(1) is attached to CF(0) by a central stalk formed by the gamma and epsilon chains, while a peripheral stalk is formed by the delta and b chains.

The protein localises to the cell membrane. The catalysed reaction is ATP + H2O + 4 H(+)(in) = ADP + phosphate + 5 H(+)(out). Functionally, produces ATP from ADP in the presence of a proton gradient across the membrane. The catalytic sites are hosted primarily by the beta subunits. The sequence is that of ATP synthase subunit beta from Caldicellulosiruptor bescii (strain ATCC BAA-1888 / DSM 6725 / KCTC 15123 / Z-1320) (Anaerocellum thermophilum).